We begin with the raw amino-acid sequence, 563 residues long: Tripeptidyl-peptidase 1 (563 aa).

The signal sequence occupies residues 1–19; sequence MGLQARFLGLLALVIAGKC. A propeptide spans 20–195 (removed in mature form); that stretch reads THSPEPDQRW…PEPQGVGPVG (176 aa). C111 and C122 form a disulfide bridge. In terms of domain architecture, Peptidase S53 spans 199-563; sequence GVTPSVLRQR…PALLKTLLNP (365 aa). N210 and N222 each carry an N-linked (GlcNAc...) asparagine glycan. Active-site charge relay system residues include E272 and D276. N-linked (GlcNAc...) asparagine glycans are attached at residues N286, N313, and N443. 2 disulfide bridges follow: C365–C526 and C522–C537. Catalysis depends on S475, which acts as the Charge relay system. The Ca(2+) site is built by D517 and V518. Ca(2+)-binding residues include G539, G541, and D543.

Monomer. Interacts with CLN5. Interacts with CLN3. Ca(2+) is required as a cofactor. In terms of processing, activated by autocatalytic proteolytical processing upon acidification. N-glycosylation is required for processing and activity.

Its subcellular location is the lysosome. It is found in the melanosome. The enzyme catalyses Release of an N-terminal tripeptide from a polypeptide, but also has endopeptidase activity.. Functionally, lysosomal serine protease with tripeptidyl-peptidase I activity. May act as a non-specific lysosomal peptidase which generates tripeptides from the breakdown products produced by lysosomal proteinases. Requires substrates with an unsubstituted N-terminus. The sequence is that of Tripeptidyl-peptidase 1 (Tpp1) from Rattus norvegicus (Rat).